The primary structure comprises 253 residues: MSESPYKSGTTHFGFRDVAAKDKQKLVGQVFTSVARNYDLMNDLMSMGVHRAWKRYYVATAQVKPGDRVLDLAGGTGDIAALLKERVGVEGSVVLGDINAGMLSVGRDRLTNRGLVLGLDYVQCNAEALPFPDNSFDLVTIAFGLRNVTDKDAGLREMYRVLKVGGQARVLEFSEVTADWFKPIYDFHSFKILPKLGKLFANDSDSYQYLAESIRKHPPQEELKAMMGQAGFERCHYKNLTGGIVSIHSGYKL.

S-adenosyl-L-methionine is bound by residues Thr76, Asp97, and 125–126 (NA).

This sequence belongs to the class I-like SAM-binding methyltransferase superfamily. MenG/UbiE family.

The enzyme catalyses a 2-demethylmenaquinol + S-adenosyl-L-methionine = a menaquinol + S-adenosyl-L-homocysteine + H(+). It catalyses the reaction a 2-methoxy-6-(all-trans-polyprenyl)benzene-1,4-diol + S-adenosyl-L-methionine = a 5-methoxy-2-methyl-3-(all-trans-polyprenyl)benzene-1,4-diol + S-adenosyl-L-homocysteine + H(+). Its pathway is quinol/quinone metabolism; menaquinone biosynthesis; menaquinol from 1,4-dihydroxy-2-naphthoate: step 2/2. It functions in the pathway cofactor biosynthesis; ubiquinone biosynthesis. Functionally, methyltransferase required for the conversion of demethylmenaquinol (DMKH2) to menaquinol (MKH2) and the conversion of 2-polyprenyl-6-methoxy-1,4-benzoquinol (DDMQH2) to 2-polyprenyl-3-methyl-6-methoxy-1,4-benzoquinol (DMQH2). This is Ubiquinone/menaquinone biosynthesis C-methyltransferase UbiE from Stenotrophomonas maltophilia (strain R551-3).